Consider the following 151-residue polypeptide: Putative pre-16S rRNA nuclease (151 aa).

The protein belongs to the YqgF nuclease family.

The protein localises to the cytoplasm. Its function is as follows. Could be a nuclease involved in processing of the 5'-end of pre-16S rRNA. The protein is Putative pre-16S rRNA nuclease of Neisseria gonorrhoeae (strain ATCC 700825 / FA 1090).